A 223-amino-acid polypeptide reads, in one-letter code: NLP effector protein 3 (223 aa).

A Conserved undecapeptide motif motif is present at residues 90–100 (AIMYVWYFPKD). The Conserved heptapeptide motif signature appears at 107-113 (GHRHDWE).

This sequence belongs to the Necrosis inducing protein (NPP1) family.

Its subcellular location is the secreted. It localises to the host cytoplasm. Probable secreted effector that may act as a pathogen-associated molecular pattern (PAMP) recognized by the plant immune system. Seems not to induce necrosis, neither in several susceptible or resistant Vitis species nor in the dicot model plant Nicotiana benthamiana. The polypeptide is NLP effector protein 3 (Plasmopara viticola (Downy mildew of grapevine)).